The primary structure comprises 194 residues: Ribonuclease HII (194 aa).

In terms of domain architecture, RNase H type-2 spans 3–193 (ILTAGVDEAG…VRNLLAQQAL (191 aa)). 3 residues coordinate a divalent metal cation: aspartate 9, glutamate 10, and aspartate 101.

The protein belongs to the RNase HII family. The cofactor is Mn(2+). It depends on Mg(2+) as a cofactor.

The protein localises to the cytoplasm. It carries out the reaction Endonucleolytic cleavage to 5'-phosphomonoester.. Functionally, endonuclease that specifically degrades the RNA of RNA-DNA hybrids. This Neisseria meningitidis serogroup B (strain ATCC BAA-335 / MC58) protein is Ribonuclease HII (rnhB).